The sequence spans 218 residues: Mitochondrial fission factor (218 aa).

At 1–198 the chain is on the cytoplasmic side; that stretch reads MAEISRIQYE…ENKERAKREM (198 aa). Position 89 is a phosphothreonine (T89). S129, S131, S146, and S171 each carry phosphoserine. A coiled-coil region spans residues 167-198; it reads VDAASLRRQIIKLNRRLQLLEEENKERAKREM. A helical; Anchor for type IV membrane protein transmembrane segment spans residues 199–216; that stretch reads VMYSITVAFWLLNSWLWF. Residues 217–218 lie on the Mitochondrial intermembrane side of the membrane; it reads RR.

This sequence belongs to the Tango11 family. In terms of assembly, homodimer. Interacts with DNM1L. Interacts with C11orf65/MFI; the interaction inhibits MFF interaction with DNM1L.

Its subcellular location is the mitochondrion outer membrane. It localises to the peroxisome. The protein resides in the cytoplasmic vesicle. It is found in the secretory vesicle. The protein localises to the synaptic vesicle. In terms of biological role, plays a role in mitochondrial and peroxisomal fission. Promotes the recruitment and association of the fission mediator dynamin-related protein 1 (DNM1L) to the mitochondrial surface. May be involved in regulation of synaptic vesicle membrane dynamics by recruitment of DNM1L to clathrin-containing vesicles. This Rattus norvegicus (Rat) protein is Mitochondrial fission factor (Mff).